The chain runs to 754 residues: MRRSRFVAQVFSDVTFADASTISAPIFTMSTRAPYRGARGRGRGRGGRSFSDRPYNDDAGRDQFVTGDSHFQSVHDANFRFRHGEPYRQHQPPLDQRQQPPFNQNYEFRPPPPSRGQWQQFRQPNQFPSNQNYAACPPPPFYQNQMSRPPPQQSFRQRPRSKPSDYREWEYAKTPPSPGSEKFVVLSYNILADYLANDHWRSLYFHIPRNMLSWGWRKSKLVFELSLWSADIMCLQEVDKFQDLEEEMKHRGYSAIWKMRTGNAVDGCAIFWRSNRFKLVHEESIQFNQLGLRDNVAQICVLETLLTSHTKENETPPPESSAGSHRVVICNIHVLFNPKRGDFKLGQVRTLLDKAHAVSKLWDDAPIVLCGDFNCTPKSPLYNFISDRKLDLSGLARDKVSGQVSAEFRPPRPENYTTRYQSANKSPQGQVQPPNLITNAHMENNSNIDVGTAPSEKTSELPCGDTILAGHEATSSSDQVLPCENMASDCQFGIENRKPDDSGNLSTAEDLSSLTISDTEPQHASSAREDLNTDRSVSSGLSETEQTPEEICSSDQDISSSLSTKVDTFVAEMKLDGLKLDEPVVFAQDEESLGEDGETFLAKLHDNNENLSQKGELVSEVPLKWSSEALNSDKITYSPSSWTPMEIATATGDPERTTVEHALELKSTYSEVEGQANTRDENGEPVVTSYHRCFMGTVDYIWRSEGLQTVRVLAPIPKQAMQWTPGFPTPKWGSDHIALVSELAFCSSKTLPKS.

2 disordered regions span residues 34–65 (PYRG…DQFV) and 85–176 (EPYR…KTPP). Residues 50–61 (FSDRPYNDDAGR) are compositionally biased toward basic and acidic residues. Polar residues-rich tracts occupy residues 96 to 106 (QRQQPPFNQNY) and 116 to 133 (GQWQ…NQNY). A compositionally biased stretch (basic and acidic residues) spans 162-171 (KPSDYREWEY). Mg(2+) is bound at residue Glu-237. 2 disordered regions span residues 404–431 (VSAE…QGQV) and 494–558 (IENR…DQDI). Composition is skewed to polar residues over residues 415-431 (NYTT…QGQV), 503-525 (GNLS…QHAS), and 534-545 (DRSVSSGLSETE).

The protein belongs to the CCR4/nocturin family. In terms of assembly, component of the CCR4-NOT complex, at least composed of CRR4 and CAF1 proteins. Mg(2+) serves as cofactor.

It localises to the nucleus. Its subcellular location is the cytoplasm. It catalyses the reaction Exonucleolytic cleavage of poly(A) to 5'-AMP.. Functionally, acts as a catalytic component of the CCR4-NOT core complex, which in the nucleus seems to be a general transcription factor, and in the cytoplasm the major mRNA deadenylase involved in mRNA turnover. This is Carbon catabolite repressor protein 4 homolog 6 (CCR4-6) from Arabidopsis thaliana (Mouse-ear cress).